The primary structure comprises 1435 residues: DNA polymerase III PolC-type (1435 aa).

Residues 420–576 (YVVFDVETTG…YDTEATGYLL (157 aa)) enclose the Exonuclease domain.

The protein belongs to the DNA polymerase type-C family. PolC subfamily.

It localises to the cytoplasm. It carries out the reaction DNA(n) + a 2'-deoxyribonucleoside 5'-triphosphate = DNA(n+1) + diphosphate. Required for replicative DNA synthesis. This DNA polymerase also exhibits 3' to 5' exonuclease activity. In Bacillus cereus (strain ATCC 14579 / DSM 31 / CCUG 7414 / JCM 2152 / NBRC 15305 / NCIMB 9373 / NCTC 2599 / NRRL B-3711), this protein is DNA polymerase III PolC-type.